The primary structure comprises 528 residues: Esterase PE16 (528 aa).

In terms of domain architecture, PE spans 1-93 (MSFVFAVPEM…AGWYVDAEAA (93 aa)). The segment at 94-143 (NAALVDTAATGASELGSGGRTALILGSTGTPRPPFDYMQQVYDRYIAPHY) is linker. The region spanning 149 to 369 (SGLYTPAQFQ…LRAIIELGYD (221 aa)) is the PE-PPE domain. Residue Ser199 is part of the active site. A helical membrane pass occupies residues 503-523 (IALLVFAAGIPAVAAVAILTG).

The protein belongs to the mycobacterial PE family.

Its subcellular location is the membrane. It catalyses the reaction a hexanoate ester + H2O = an aliphatic alcohol + hexanoate + H(+). The enzyme catalyses an octanoate ester + H2O = an aliphatic alcohol + octanoate + H(+). It carries out the reaction a butanoate ester + H2O = an aliphatic alcohol + butanoate + H(+). With respect to regulation, esterase activity is significantly inhibited by the serine modifier phenylmethylsulfonyl fluoride (PMSF). Its function is as follows. Esterase that hydrolyzes short to medium chain fatty acid esters with the highest specific activity for p-nitrophenyl caproate (pNPC6). Has lower activity with p-nitrophenyl caprylate (pNPC8) and p-nitrophenyl butyrate (pNPC4). Has weak activity with p-nitrophenyl caprate (pNPC10) and p-nitrophenyl laurate (pNPC12). Does not possess lipolytic activity and cutinase activity. This chain is Esterase PE16, found in Mycobacterium tuberculosis (strain ATCC 25618 / H37Rv).